The chain runs to 248 residues: Probable transcriptional regulatory protein SO_2432 (248 aa).

This sequence belongs to the TACO1 family.

It localises to the cytoplasm. This Shewanella oneidensis (strain ATCC 700550 / JCM 31522 / CIP 106686 / LMG 19005 / NCIMB 14063 / MR-1) protein is Probable transcriptional regulatory protein SO_2432.